Reading from the N-terminus, the 532-residue chain is Phosphate-import permease protein PhnE (532 aa).

The interval 1–20 is disordered; the sequence is MTTEITRPPAPPSRPSESRK. 12 helical membrane passes run 23-45, 85-107, 134-156, 187-209, 216-235, 245-267, 287-304, 345-367, 395-417, 452-471, 478-495, and 505-527; these read LPGLLHLVAIAAVLATIVSAWAI, LLMAVLGTTLAAIASVPLAFLAA, LFAVLFVRALGIGVLPGVLALAL, GYFRELLNAVVPQVVPSWIAMFV, LRMSVVLGFVGAGGIGFALQ, RALGIVCVILVIIAGMELLAIAI, FGLSGVLVGSCVAAFVLL, VAIGVVATAIGIALSIPAGILAA, LAVVFVAALGLGPIAGTCALAIG, LFAAVLPQSMPALVGSSLYL, TSTILGIVGAGGVGYLLF, and VAGAIVIVIFVIVYAIERLSGWI. The region spanning 81-264 is the ABC transmembrane type-1 1 domain; it reads AVETLLMAVL…VIIAGMELLA (184 aa). The ABC transmembrane type-1 2 domain occupies 341-524; it reads AAQTVAIGVV…VIVYAIERLS (184 aa).

Belongs to the binding-protein-dependent transport system permease family. The complex is composed of two ATP-binding proteins (PhnC), two transmembrane proteins (PhnE) and a solute-binding protein (PhnD).

The protein resides in the cell membrane. Part of the ABC transporter complex PhnCDE involved in phosphate import. Responsible for the translocation of the substrate across the membrane. This is Phosphate-import permease protein PhnE (phnE) from Mycolicibacterium smegmatis (strain ATCC 700084 / mc(2)155) (Mycobacterium smegmatis).